Consider the following 262-residue polypeptide: Flap endonuclease Xni (262 aa).

Asp-105 contacts Mg(2+). Residues 162-254 (ERSQFLDLMA…LKDFRVIDSL (93 aa)) form the 5'-3' exonuclease domain. 5 residues coordinate K(+): Leu-172, Ala-173, Pro-181, Ile-183, and Ile-186. The segment at 185–190 (GIGPKS) is interaction with DNA.

Belongs to the Xni family. Mg(2+) is required as a cofactor. The cofactor is K(+).

Functionally, has flap endonuclease activity. During DNA replication, flap endonucleases cleave the 5'-overhanging flap structure that is generated by displacement synthesis when DNA polymerase encounters the 5'-end of a downstream Okazaki fragment. The chain is Flap endonuclease Xni from Shewanella baltica (strain OS195).